The sequence spans 179 residues: Large ribosomal subunit protein uL6 (179 aa).

Belongs to the universal ribosomal protein uL6 family. As to quaternary structure, part of the 50S ribosomal subunit.

Functionally, this protein binds to the 23S rRNA, and is important in its secondary structure. It is located near the subunit interface in the base of the L7/L12 stalk, and near the tRNA binding site of the peptidyltransferase center. The polypeptide is Large ribosomal subunit protein uL6 (Pelodictyon phaeoclathratiforme (strain DSM 5477 / BU-1)).